A 402-amino-acid chain; its full sequence is GTPase HflX (402 aa).

Residues 181 to 350 (DTVGLIGYTN…MIIEHLNLSI (170 aa)) form the Hflx-type G domain. GTP-binding positions include 187–194 (GYTNAGKT), 212–216 (FTTLT), 233–236 (DTVG), 300–303 (NKVD), and 328–330 (SAK). The Mg(2+) site is built by Thr194 and Thr214.

It belongs to the TRAFAC class OBG-HflX-like GTPase superfamily. HflX GTPase family. As to quaternary structure, monomer. Associates with the 50S ribosomal subunit. Requires Mg(2+) as cofactor.

The protein resides in the cytoplasm. Its function is as follows. GTPase that associates with the 50S ribosomal subunit and may have a role during protein synthesis or ribosome biogenesis. The chain is GTPase HflX from Methanocaldococcus jannaschii (strain ATCC 43067 / DSM 2661 / JAL-1 / JCM 10045 / NBRC 100440) (Methanococcus jannaschii).